We begin with the raw amino-acid sequence, 93 residues long: Regulatory protein RepI (93 aa).

In terms of biological role, this protein is involved in regulating the plasmid copy-number. Increasing the level of this protein results in a higher plasmid copy-number. This chain is Regulatory protein RepI (repI), found in Escherichia coli.